Reading from the N-terminus, the 344-residue chain is Enoyl-[acyl-carrier-protein] reductase, mitochondrial (344 aa).

The transit peptide at 1 to 14 directs the protein to the mitochondrion; that stretch reads MLKVLSLRSALQRA. Tyr69 (proton donor) is an active-site residue. NADP(+) is bound by residues Asn142, 168–171, 191–193, 255–258, 280–282, and Lys338; these read NSAV, RSR, YGGM, and FWM.

Belongs to the zinc-containing alcohol dehydrogenase family. Quinone oxidoreductase subfamily. Homodimer.

The protein localises to the mitochondrion. The catalysed reaction is a 2,3-saturated acyl-[ACP] + NADP(+) = a (2E)-enoyl-[ACP] + NADPH + H(+). Its function is as follows. Catalyzes the NADPH-dependent reduction of trans-2-enoyl thioesters in mitochondrial fatty acid synthesis (fatty acid synthesis type II). Fatty acid chain elongation in mitochondria uses acyl carrier protein (ACP) as an acyl group carrier, but the enzyme accepts both ACP and CoA thioesters as substrates in vitro. May provide the octanoyl chain used for lipoic acid biosynthesis, regulating protein lipoylation and mitochondrial respiratory activity. Involved in iron homeostasis; affecting Fe-S cluster assembly and ceramide metabolism. Required for proper morphology and bioenergetic functions of mitochondria. Required for maintenance of neurons. This chain is Enoyl-[acyl-carrier-protein] reductase, mitochondrial, found in Caenorhabditis elegans.